Consider the following 561-residue polypeptide: DNA ligase (561 aa).

Glu-247 is an ATP binding site. The N6-AMP-lysine intermediate role is filled by Lys-249. ATP-binding residues include Arg-254, Arg-269, Glu-299, Phe-339, Arg-414, and Lys-420.

Belongs to the ATP-dependent DNA ligase family. In terms of assembly, monomer. The cofactor is Mg(2+).

It catalyses the reaction ATP + (deoxyribonucleotide)n-3'-hydroxyl + 5'-phospho-(deoxyribonucleotide)m = (deoxyribonucleotide)n+m + AMP + diphosphate.. Its function is as follows. DNA ligase that seals nicks in double-stranded DNA during DNA replication, DNA recombination and DNA repair. This is DNA ligase from Pyrococcus furiosus (strain ATCC 43587 / DSM 3638 / JCM 8422 / Vc1).